Reading from the N-terminus, the 1103-residue chain is Voltage-dependent calcium channel subunit alpha-2/delta-1 (1103 aa).

An N-terminal signal peptide occupies residues 1-24 (MAAGCLLALTLTLFQSGLIGPSSE). Residues 25–1073 (EPFPSPVTIK…VLEDYTDCGG (1049 aa)) are Extracellular-facing. Asn-92 carries N-linked (GlcNAc...) asparagine glycosylation. Ser-119 is subject to Phosphoserine. 2 N-linked (GlcNAc...) asparagine glycosylation sites follow: Asn-136 and Asn-184. Positions 253 to 430 (DMLILVDVSG…INTQEYLDVL (178 aa)) constitute a VWFA domain. Residues Asp-259, Ser-261, and Ser-263 each coordinate a divalent metal cation. The short motif at 259–263 (DVSGS) is the MIDAS-like motif element. Asn-324 and Asn-348 each carry an N-linked (GlcNAc...) asparagine glycan. The cysteines at positions 404 and 1059 are disulfide-linked. A Cache domain is found at 446 to 537 (WTNVYLDALE…QPKPIGVGIP (92 aa)). N-linked (GlcNAc...) asparagine glycans are attached at residues Asn-613, Asn-781, and Asn-888. The helical transmembrane segment at 1074 to 1094 (VSGLNPSLWSIFGLQFILLWL) threads the bilayer. Topologically, residues 1095–1103 (VSGSRHYLL) are cytoplasmic.

It belongs to the calcium channel subunit alpha-2/delta family. Dimer formed of alpha-2-1 and delta-1 chains; disulfide-linked. Voltage-dependent calcium channels are multisubunit complexes, consisting of alpha-1 (CACNA1), alpha-2 (CACNA2D), beta (CACNB) and delta (CACNA2D) subunits in a 1:1:1:1 ratio. In terms of processing, proteolytically processed into subunits alpha-2-1 and delta-1 that are disulfide-linked. As to expression, isoform 2A is expressed in skeletal muscle and aorta. Isoform 2B is expressed in brain. Isoform 2C is expressed in heart. Isoform 2D is expressed in heart and smooth muscle. Isoform 2E is expressed in smooth muscle. All five isoforms are expressed in the cardiovascular system.

It localises to the membrane. Its subcellular location is the cell membrane. Its function is as follows. The alpha-2/delta subunit of voltage-dependent calcium channels regulates calcium current density and activation/inactivation kinetics of the calcium channel. Plays an important role in excitation-contraction coupling. In Mus musculus (Mouse), this protein is Voltage-dependent calcium channel subunit alpha-2/delta-1 (Cacna2d1).